A 508-amino-acid polypeptide reads, in one-letter code: Ribonuclease Y (508 aa).

A helical membrane pass occupies residues 2–22 (IITALIAIAVGFLIGYLARKI). Residues 198–261 (TVSVVTLPND…EVARIALEKL (64 aa)) enclose the KH domain. An HD domain is found at 324 to 417 (VLKHSIEVAH…VQAADAISAA (94 aa)).

The protein belongs to the RNase Y family.

The protein localises to the cell membrane. In terms of biological role, endoribonuclease that initiates mRNA decay. The chain is Ribonuclease Y from Thermoanaerobacter pseudethanolicus (strain ATCC 33223 / 39E) (Clostridium thermohydrosulfuricum).